The chain runs to 971 residues: Exportin-2 (971 aa).

The 74-residue stretch at 29–102 (AEKFLESVEG…KANIVNLMLT (74 aa)) folds into the Importin N-terminal domain.

The protein belongs to the XPO2/CSE1 family. In terms of assembly, interacts with cftr. In terms of tissue distribution, detected in larval gut, liver, exocrine pancreas and part of the brain and retina at 96 hpf.

The protein resides in the cytoplasm. The protein localises to the nucleus. It is found in the apical cell membrane. It localises to the basal cell membrane. Its subcellular location is the lateral cell membrane. Its function is as follows. Export receptor for importin alpha. Mediates importin-alpha re-export from the nucleus to the cytoplasm after import substrates have been released into the nucleoplasm. Negatively regulates fluid secretion and plays a role in fluid homeostasis by down-regulating cftr activity. This Danio rerio (Zebrafish) protein is Exportin-2 (cse1l).